A 283-amino-acid chain; its full sequence is Large ribosomal subunit protein uL4 (283 aa).

Belongs to the universal ribosomal protein uL4 family. In terms of assembly, part of the 50S ribosomal subunit.

In terms of biological role, one of the primary rRNA binding proteins, this protein initially binds near the 5'-end of the 23S rRNA. It is important during the early stages of 50S assembly. It makes multiple contacts with different domains of the 23S rRNA in the assembled 50S subunit and ribosome. Functionally, forms part of the polypeptide exit tunnel. This chain is Large ribosomal subunit protein uL4, found in Pyrobaculum aerophilum (strain ATCC 51768 / DSM 7523 / JCM 9630 / CIP 104966 / NBRC 100827 / IM2).